Reading from the N-terminus, the 155-residue chain is MADPEKQGPAESRAEDEVMEGAQGGEDAATGDSATAPAAEEPQAPAENAPKPKNDFIESLPNPVKCRVLALKKLQKRCDKIEAKFDKEFQALEKKYNDIYKPLLAKIQELTGEMEGCAWTLEGEDDEDDEEEEDEEEEEEEAAAGATGGPDSAEK.

A compositionally biased stretch (basic and acidic residues) spans 1-16 (MADPEKQGPAESRAED). Positions 1–60 (MADPEKQGPAESRAEDEVMEGAQGGEDAATGDSATAPAAEEPQAPAENAPKPKNDFIESL) are disordered. The span at 27–49 (DAATGDSATAPAAEEPQAPAENA) shows a compositional bias: low complexity. Residues 68-94 (VLALKKLQKRCDKIEAKFDKEFQALEK) adopt a coiled-coil conformation. Residues 119-155 (WTLEGEDDEDDEEEEDEEEEEEEAAAGATGGPDSAEK) form a disordered region. The segment covering 122-142 (EGEDDEDDEEEEDEEEEEEEA) has biased composition (acidic residues).

This sequence belongs to the nucleosome assembly protein (NAP) family.

Its subcellular location is the nucleus. The chain is Nucleosome assembly protein 1-like 5 (Nap1l5) from Rattus norvegicus (Rat).